The primary structure comprises 593 residues: Probable metalloendopeptidase G1-type (593 aa).

H41 is a binding site for Zn(2+). E44 is a catalytic residue. Residue H45 participates in Zn(2+) binding.

It belongs to the peptidase M44 family. The cofactor is Zn(2+).

Functionally, seems to be involved in viral proteins maturation by cleavage at Ala-Gly-|-Xaa motifs. The sequence is that of Probable metalloendopeptidase G1-type from Homo sapiens (Human).